A 776-amino-acid polypeptide reads, in one-letter code: MASLIYRQLLTNSYTVELSDEIQEIGSTKTQDVTVNPGPFAQTNYAPVNWGPGETNDSTTVEPVLDGPYQPTTFNPPVSYWMLLAPTNAGVVVEGTNNTNRWLATILIEPNVQQVERTYTLFGQQVQVTVSNNSQTKWKFVDLSKQTQDGNYSQHGSLLSTPKLYGVMKHGGKIYTYNGETPNATTDYYSTTNFDTVNMTAYCDFYIIPLAQEAKCTKYINNGLPPIQNTRNIVPVSIVSRNIVYTRAQPNQDIVVSKTSLWKEMQYNRDIVIRFKFANSIIKSGGLGYKWSEVSFKPANYQYTYTRDGEEVTAHTTCSVNGINNFNYNGGSLPTDFVISKYEVIKENSFVYIDYWDDSQAFRNMVNVRSLAADLNSVMCTGGDYSFALPLGHYPVMTGGAVSLHSAGVTLSTQFTDFVSLNSLRFRFRLSVEEPPFSILRTRVSGLYGLPAARPNNSQEYYEIAGRFSLISLVPSNDDYQTPIINSVTVRQDLERQLGELRDEFNNLSQQIAMSQLIDLALLPLDMFSMFSGIKSTIDAAKSMATNVMKRFKKSSLANSVSTLTDSLSDAASSISRNASVRSVSSTASAWTEVSNITSDINVTTSSISTQTSTISRRLRLKEMATQTDGMNFDDISAAVLKTKIDKSTQLNTNTLPEIVTEASEKFIPNRAYRVIKDDEVLEASTDGKYFAYKVETFEEIPFDVQKFADLVTDSPVISAIIDFKTLKNLNDNYGISRQQALNLLRSDPRVLREFINQDNPIIRNRIESLIMQCRL.

The tract at residues 65 to 224 (LDGPYQPTTF…KCTKYINNGL (160 aa)) is spike head. Cysteine 203 and cysteine 216 are disulfide-bonded. The interval 248-479 (AQPNQDIVVS…LISLVPSNDD (232 aa)) is spike body and stalk (antigen domain). The DGE motif; interaction with ITGA2/ITGB1 heterodimer motif lies at 308 to 310 (DGE). The cysteines at positions 318 and 380 are disulfide-linked. A hydrophobic; possible role in virus entry into host cell region spans residues 389 to 409 (LPLGHYPVMTGGAVSLHSAGV). The short motif at 448–450 (YGL) is the YGL motif; interaction with ITGA4 element. A coiled-coil region spans residues 484–518 (IINSVTVRQDLERQLGELRDEFNNLSQQIAMSQLI). The spike foot stretch occupies residues 510–776 (QQIAMSQLID…IESLIMQCRL (267 aa)). Residues 644-646 (KID) carry the KID motif; interaction with HSPA8 motif.

This sequence belongs to the rotavirus VP4 family. In terms of assembly, homotrimer. VP4 adopts a dimeric appearance above the capsid surface, while forming a trimeric base anchored inside the capsid layer. Only hints of the third molecule are observed above the capsid surface. It probably performs a series of molecular rearrangements during viral entry. Prior to trypsin cleavage, it is flexible. The priming trypsin cleavage triggers its rearrangement into rigid spikes with approximate two-fold symmetry of their protruding parts. After an unknown second triggering event, cleaved VP4 may undergo another rearrangement, in which two VP5* subunits fold back on themselves and join a third subunit to form a tightly associated trimer, shaped like a folded umbrella. Interacts with VP6. Interacts with VP7. As to quaternary structure, homotrimer. The trimer is coiled-coil stabilized by its C-terminus, however, its N-terminus, known as antigen domain or 'body', seems to be flexible allowing it to self-associate either as a dimer or a trimer. In terms of processing, proteolytic cleavage by trypsin results in activation of VP4 functions and greatly increases infectivity. The penetration into the host cell is dependent on trypsin treatment of VP4. It produces two peptides, VP5* and VP8* that remain associated with the virion. Cleavage of VP4 by trypsin probably occurs in vivo in the lumen of the intestine prior to infection of enterocytes. Trypsin seems to be incorporated into the three-layered viral particles but remains inactive as long as the viral outer capsid is intact and would only be activated upon the solubilization of the latter.

Its subcellular location is the virion. It localises to the host rough endoplasmic reticulum. The protein localises to the host cell membrane. The protein resides in the host cytoplasm. It is found in the host cytoskeleton. Its subcellular location is the host endoplasmic reticulum-Golgi intermediate compartment. Spike-forming protein that mediates virion attachment to the host epithelial cell receptors and plays a major role in cell penetration, determination of host range restriction and virulence. Rotavirus attachment and entry into the host cell probably involves multiple sequential contacts between the outer capsid proteins VP4 and VP7, and the cell receptors. It is subsequently lost, together with VP7, following virus entry into the host cell. Following entry into the host cell, low intracellular or intravesicular Ca(2+) concentration probably causes the calcium-stabilized VP7 trimers to dissociate from the virion. This step is probably necessary for the membrane-disrupting entry step and the release of VP4, which is locked onto the virion by VP7. During the virus exit from the host cell, VP4 seems to be required to target the newly formed virions to the host cell lipid rafts. In terms of biological role, forms the spike 'foot' and 'body' and acts as a membrane permeabilization protein that mediates release of viral particles from endosomal compartments into the cytoplasm. During entry, the part of VP5* that protrudes from the virus folds back on itself and reorganizes from a local dimer to a trimer. This reorganization may be linked to membrane penetration by exposing VP5* hydrophobic region. In integrin-dependent strains, VP5* targets the integrin heterodimer ITGA2/ITGB1 for cell attachment. Functionally, forms the head of the spikes and mediates the recognition of specific host cell surface glycans. It is the viral hemagglutinin and an important target of neutralizing antibodies. In sialic acid-dependent strains, VP8* binds to host cell sialic acid, most probably a ganglioside, providing the initial contact. In some other strains, VP8* mediates the attachment to histo-blood group antigens (HBGAs) for viral entry. In Bos taurus (Bovine), this protein is Outer capsid protein VP4.